The chain runs to 201 residues: Lipopolysaccharide core heptose(II)-phosphate phosphatase (201 aa).

The first 35 residues, 1–35 (MLAFTLRFIKNKRYLATLAGALVIIAGLTSQHAWS), serve as a signal peptide directing secretion.

It belongs to the phosphoglycerate mutase family. Ais subfamily.

It localises to the periplasm. It functions in the pathway bacterial outer membrane biogenesis; lipopolysaccharide metabolism. Its function is as follows. Catalyzes the dephosphorylation of heptose(II) of the outer membrane lipopolysaccharide core. This Salmonella newport (strain SL254) protein is Lipopolysaccharide core heptose(II)-phosphate phosphatase.